A 102-amino-acid polypeptide reads, in one-letter code: NADH-quinone oxidoreductase subunit K (102 aa).

A run of 3 helical transmembrane segments spans residues 6 to 26 (MEHG…GLLI), 30 to 50 (LLYI…AFVV), and 65 to 85 (ILVI…LLLL).

It belongs to the complex I subunit 4L family. As to quaternary structure, NDH-1 is composed of 13 different subunits. Subunits NuoA, H, J, K, L, M, N constitute the membrane sector of the complex.

It localises to the cell inner membrane. It carries out the reaction a quinone + NADH + 5 H(+)(in) = a quinol + NAD(+) + 4 H(+)(out). NDH-1 shuttles electrons from NADH, via FMN and iron-sulfur (Fe-S) centers, to quinones in the respiratory chain. The immediate electron acceptor for the enzyme in this species is believed to be ubiquinone. Couples the redox reaction to proton translocation (for every two electrons transferred, four hydrogen ions are translocated across the cytoplasmic membrane), and thus conserves the redox energy in a proton gradient. This Shewanella oneidensis (strain ATCC 700550 / JCM 31522 / CIP 106686 / LMG 19005 / NCIMB 14063 / MR-1) protein is NADH-quinone oxidoreductase subunit K.